Reading from the N-terminus, the 305-residue chain is Ribosomal RNA large subunit methyltransferase F (305 aa).

This sequence belongs to the methyltransferase superfamily. METTL16/RlmF family.

It is found in the cytoplasm. The catalysed reaction is adenosine(1618) in 23S rRNA + S-adenosyl-L-methionine = N(6)-methyladenosine(1618) in 23S rRNA + S-adenosyl-L-homocysteine + H(+). Specifically methylates the adenine in position 1618 of 23S rRNA. The protein is Ribosomal RNA large subunit methyltransferase F of Enterobacter sp. (strain 638).